The following is a 159-amino-acid chain: NAD(P)H-quinone oxidoreductase subunit J, chloroplastic (159 aa).

The protein belongs to the complex I 30 kDa subunit family. In terms of assembly, NDH is composed of at least 16 different subunits, 5 of which are encoded in the nucleus.

It localises to the plastid. The protein resides in the chloroplast thylakoid membrane. It catalyses the reaction a plastoquinone + NADH + (n+1) H(+)(in) = a plastoquinol + NAD(+) + n H(+)(out). It carries out the reaction a plastoquinone + NADPH + (n+1) H(+)(in) = a plastoquinol + NADP(+) + n H(+)(out). Functionally, NDH shuttles electrons from NAD(P)H:plastoquinone, via FMN and iron-sulfur (Fe-S) centers, to quinones in the photosynthetic chain and possibly in a chloroplast respiratory chain. The immediate electron acceptor for the enzyme in this species is believed to be plastoquinone. Couples the redox reaction to proton translocation, and thus conserves the redox energy in a proton gradient. This Populus trichocarpa (Western balsam poplar) protein is NAD(P)H-quinone oxidoreductase subunit J, chloroplastic.